The primary structure comprises 104 residues: Ribonuclease P protein component 4 (104 aa).

Residues cysteine 57, cysteine 60, cysteine 83, and cysteine 86 each contribute to the Zn(2+) site.

It belongs to the eukaryotic/archaeal RNase P protein component 4 family. Consists of a catalytic RNA component and at least 4-5 protein subunits. It depends on Zn(2+) as a cofactor.

Its subcellular location is the cytoplasm. The catalysed reaction is Endonucleolytic cleavage of RNA, removing 5'-extranucleotides from tRNA precursor.. Part of ribonuclease P, a protein complex that generates mature tRNA molecules by cleaving their 5'-ends. The sequence is that of Ribonuclease P protein component 4 from Saccharolobus islandicus (strain L.S.2.15 / Lassen #1) (Sulfolobus islandicus).